The chain runs to 431 residues: Aspartate--tRNA(Asp/Asn) ligase (431 aa).

Glutamate 170 serves as a coordination point for L-aspartate. The interval 192-195 (QLYK) is aspartate. Position 214 (arginine 214) interacts with L-aspartate. Residues 214-216 (RAE), 222-224 (RHL), and glutamate 354 contribute to the ATP site. Positions 354 and 357 each coordinate Mg(2+). L-aspartate contacts are provided by serine 357 and arginine 361. 402-405 (GLER) contacts ATP.

This sequence belongs to the class-II aminoacyl-tRNA synthetase family. Type 2 subfamily. In terms of assembly, homodimer. It depends on Mg(2+) as a cofactor.

Its subcellular location is the cytoplasm. The enzyme catalyses tRNA(Asx) + L-aspartate + ATP = L-aspartyl-tRNA(Asx) + AMP + diphosphate. Its function is as follows. Aspartyl-tRNA synthetase with relaxed tRNA specificity since it is able to aspartylate not only its cognate tRNA(Asp) but also tRNA(Asn). Reaction proceeds in two steps: L-aspartate is first activated by ATP to form Asp-AMP and then transferred to the acceptor end of tRNA(Asp/Asn). This Methanopyrus kandleri (strain AV19 / DSM 6324 / JCM 9639 / NBRC 100938) protein is Aspartate--tRNA(Asp/Asn) ligase.